The sequence spans 77 residues: Pi-stichotoxin-Hmg5a (77 aa).

The N-terminal stretch at 1–21 (MDYQRLLFLFAVAMVITTTVA) is a signal peptide. A propeptide spanning residues 22 to 34 (LPQDTALMDGQLQ) is cleaved from the precursor. Disulfide bonds link cysteine 40/cysteine 73, cysteine 42/cysteine 66, and cysteine 56/cysteine 74.

The protein belongs to the sea anemone type 3 (BDS) potassium channel toxin family.

Its subcellular location is the secreted. It is found in the nematocyst. Functionally, toxin that inhibits rat ASIC3 channels (IC(50)=13.8 uM). Also able to bind T.californica muscle-type nicotinic acetylcholine receptors (nAChR), and human alpha-7/CHRNA7 nicotinic acetylcholine receptors. The chain is Pi-stichotoxin-Hmg5a from Heteractis magnifica (Magnificent sea anemone).